The chain runs to 143 residues: Transcriptional regulator MraZ (143 aa).

2 consecutive SpoVT-AbrB domains span residues glutamate 5 to glutamate 47 and alanine 76 to leucine 119.

The protein belongs to the MraZ family. Forms oligomers.

The protein localises to the cytoplasm. It is found in the nucleoid. In Halalkalibacterium halodurans (strain ATCC BAA-125 / DSM 18197 / FERM 7344 / JCM 9153 / C-125) (Bacillus halodurans), this protein is Transcriptional regulator MraZ.